We begin with the raw amino-acid sequence, 477 residues long: MQAKPTTAVKQKQNFGQRLFTLLRNRDFMISFLITVVLLVLFRVLAIIPLPGIQVNQTGLDQNSNDFFSLFNLLGGGGLNQLSLFAVGISPYISAQIVMQLLSTDLIPPLSKLVNSGEVGRRKIEMITRIITLPFALVQSFAVIQIATNSGGGSSPITLKNNGSDFVAFYIIAMTAGTYLSVFLGDTISKKGIGNGITLLILSGILAQLPEGFIAAYSVLSGVVVTINATLTTAISFFIYFMAFVTLLFATTFITQETRKIPIQQSGQGLVTESSALPYLPIKVNSAGVIPVIFASSIMSIPVTIAQFQPQTESRWFVEDYLSLSKPTGIVLYGILVILFSFFYSYIQINPERLAKNFEKSGRFIPGIRPGKDTEKHIARVLVRINFIGAPFLTVIAIIPYIVSALIHLPNSLSLGGTGIIIIVTAVVEFMSALRSAATATNYQQLRRNLAIEVQKTAQQDKEEQLRAETPGIGNLW.

Transmembrane regions (helical) follow at residues 28–48, 67–89, 130–150, 165–185, 196–216, 234–254, 286–306, 329–349, 387–407, and 413–433; these read FMISFLITVVLLVLFRVLAII, FFSLFNLLGGGGLNQLSLFAVGI, IITLPFALVQSFAVIQIATNS, DFVAFYIIAMTAGTYLSVFLG, GITLLILSGILAQLPEGFIAA, AISFFIYFMAFVTLLFATTFI, SAGVIPVIFASSIMSIPVTIA, GIVLYGILVILFSFFYSYIQI, FIGAPFLTVIAIIPYIVSALI, and LSLGGTGIIIIVTAVVEFMSA.

The protein belongs to the SecY/SEC61-alpha family. In terms of assembly, component of the Sec protein translocase complex. Heterotrimer consisting of SecY, SecE and SecG subunits. The heterotrimers can form oligomers, although 1 heterotrimer is thought to be able to translocate proteins. Interacts with the ribosome. Interacts with SecDF, and other proteins may be involved. Interacts with SecA.

Its subcellular location is the cell membrane. The central subunit of the protein translocation channel SecYEG. Consists of two halves formed by TMs 1-5 and 6-10. These two domains form a lateral gate at the front which open onto the bilayer between TMs 2 and 7, and are clamped together by SecE at the back. The channel is closed by both a pore ring composed of hydrophobic SecY resides and a short helix (helix 2A) on the extracellular side of the membrane which forms a plug. The plug probably moves laterally to allow the channel to open. The ring and the pore may move independently. The sequence is that of Protein translocase subunit SecY from Mycoplasma pneumoniae (strain ATCC 29342 / M129 / Subtype 1) (Mycoplasmoides pneumoniae).